Reading from the N-terminus, the 649-residue chain is Ubiquitin-associated and SH3 domain-containing protein B (649 aa).

The residue at position 20 (S20) is a Phosphoserine. Position 23 is a phosphothreonine (T23). In terms of domain architecture, UBA spans 27 to 76; that stretch reads NRQQRPGTIKHGSALDVLLSMGFPRARAQKALASTGGRSVQAACDWLFSH. The SH3 domain occupies 254–319; that stretch reads ANHETLQVIY…PENYITKADE (66 aa). The protein tyrosine phosphatase stretch occupies residues 380-649; sequence GPQKRCLFVC…FNWRETLLQE (270 aa). R390 is an active-site residue. H391 acts as the Tele-phosphohistidine intermediate in catalysis. Residue H576 is part of the active site.

As to quaternary structure, homodimer. Interacts with JAK2 (in vitro). Interacts with CBL. Part of a complex containing CBL and activated EGFR. Interacts with ubiquitin and with mono-ubiquitinated proteins. Interacts with ZAP70 (ubiquitinated form).

It localises to the cytoplasm. It is found in the nucleus. It carries out the reaction O-phospho-L-tyrosyl-[protein] + H2O = L-tyrosyl-[protein] + phosphate. Functionally, interferes with CBL-mediated down-regulation and degradation of receptor-type tyrosine kinases. Promotes accumulation of activated target receptors, such as T-cell receptors and EGFR, on the cell surface. Exhibits tyrosine phosphatase activity toward several substrates including EGFR, FAK, SYK, and ZAP70. Down-regulates proteins that are dually modified by both protein tyrosine phosphorylation and ubiquitination. The chain is Ubiquitin-associated and SH3 domain-containing protein B (UBASH3B) from Homo sapiens (Human).